A 625-amino-acid polypeptide reads, in one-letter code: Chaperone protein HtpG (625 aa).

The a; substrate-binding stretch occupies residues 1–341 (MERKEFKAES…SEDLSLNISR (341 aa)). A b region spans residues 342–551 (EMLQHDRQLK…EGEVSIEMEK (210 aa)). The interval 552–625 (VLRAMPDNQN…FSNDICKVMA (74 aa)) is c.

It belongs to the heat shock protein 90 family. As to quaternary structure, homodimer.

Its subcellular location is the cytoplasm. Functionally, molecular chaperone. Has ATPase activity. The chain is Chaperone protein HtpG from Halalkalibacterium halodurans (strain ATCC BAA-125 / DSM 18197 / FERM 7344 / JCM 9153 / C-125) (Bacillus halodurans).